We begin with the raw amino-acid sequence, 208 residues long: Small ribosomal subunit protein uS4 (208 aa).

An S4 RNA-binding domain is found at 98–161; sequence QRLDNLVYRM…KNNPQILRAV (64 aa).

It belongs to the universal ribosomal protein uS4 family. As to quaternary structure, part of the 30S ribosomal subunit. Contacts protein S5. The interaction surface between S4 and S5 is involved in control of translational fidelity.

Its function is as follows. One of the primary rRNA binding proteins, it binds directly to 16S rRNA where it nucleates assembly of the body of the 30S subunit. With S5 and S12 plays an important role in translational accuracy. This is Small ribosomal subunit protein uS4 from Campylobacter hominis (strain ATCC BAA-381 / DSM 21671 / CCUG 45161 / LMG 19568 / NCTC 13146 / CH001A).